The chain runs to 489 residues: Glutamyl-tRNA(Gln) amidotransferase subunit A (489 aa).

Residues Lys-75 and Ser-150 each act as charge relay system in the active site. Ser-174 serves as the catalytic Acyl-ester intermediate.

The protein belongs to the amidase family. GatA subfamily. As to quaternary structure, heterotrimer of A, B and C subunits.

It carries out the reaction L-glutamyl-tRNA(Gln) + L-glutamine + ATP + H2O = L-glutaminyl-tRNA(Gln) + L-glutamate + ADP + phosphate + H(+). Functionally, allows the formation of correctly charged Gln-tRNA(Gln) through the transamidation of misacylated Glu-tRNA(Gln) in organisms which lack glutaminyl-tRNA synthetase. The reaction takes place in the presence of glutamine and ATP through an activated gamma-phospho-Glu-tRNA(Gln). In Gloeobacter violaceus (strain ATCC 29082 / PCC 7421), this protein is Glutamyl-tRNA(Gln) amidotransferase subunit A.